Reading from the N-terminus, the 306-residue chain is UDP-N-acetylenolpyruvoylglucosamine reductase (306 aa).

One can recognise an FAD-binding PCMH-type domain in the interval 29–193 (RVGGPADWLF…IRASLRGTPD (165 aa)). Residue Arg173 is part of the active site. The Proton donor role is filled by Ser222. Residue Glu292 is part of the active site.

This sequence belongs to the MurB family. It depends on FAD as a cofactor.

The protein resides in the cytoplasm. The enzyme catalyses UDP-N-acetyl-alpha-D-muramate + NADP(+) = UDP-N-acetyl-3-O-(1-carboxyvinyl)-alpha-D-glucosamine + NADPH + H(+). Its pathway is cell wall biogenesis; peptidoglycan biosynthesis. In terms of biological role, cell wall formation. The protein is UDP-N-acetylenolpyruvoylglucosamine reductase of Gluconobacter oxydans (strain 621H) (Gluconobacter suboxydans).